Here is an 853-residue protein sequence, read N- to C-terminus: Probable inorganic carbon transporter subunit DabA (853 aa).

Residues 1–21 form a disordered region; it reads MSHANSEETMMNTAVAHPSTS. The segment covering 7–21 has biased composition (polar residues); the sequence is EETMMNTAVAHPSTS. Positions 364, 366, 546, and 561 each coordinate Zn(2+).

The protein belongs to the inorganic carbon transporter (TC 9.A.2) DabA family. As to quaternary structure, forms a complex with DabB. The cofactor is Zn(2+).

It localises to the cell inner membrane. Functionally, part of an energy-coupled inorganic carbon pump. This is Probable inorganic carbon transporter subunit DabA from Methylovorus glucosotrophus (strain SIP3-4).